The sequence spans 37 residues: MQDLEIFLSIFAFIFVFYFGAHRTVMNRNKSDVPYLQ.

A helical membrane pass occupies residues 1 to 21 (MQDLEIFLSIFAFIFVFYFGA).

The protein resides in the endoplasmic reticulum membrane. This is an uncharacterized protein from Saccharomyces cerevisiae (strain ATCC 204508 / S288c) (Baker's yeast).